A 387-amino-acid chain; its full sequence is Cobalt-precorrin-5B C(1)-methyltransferase (387 aa).

The protein belongs to the CbiD family.

The catalysed reaction is Co-precorrin-5B + S-adenosyl-L-methionine = Co-precorrin-6A + S-adenosyl-L-homocysteine. It functions in the pathway cofactor biosynthesis; adenosylcobalamin biosynthesis; cob(II)yrinate a,c-diamide from sirohydrochlorin (anaerobic route): step 6/10. Catalyzes the methylation of C-1 in cobalt-precorrin-5B to form cobalt-precorrin-6A. The sequence is that of Cobalt-precorrin-5B C(1)-methyltransferase from Desulfitobacterium hafniense (strain Y51).